Consider the following 146-residue polypeptide: Protein MGF 100-3L (146 aa).

This sequence belongs to the asfivirus MGF 100 family.

In terms of biological role, plays a role in virus cell tropism, and may be required for efficient virus replication in macrophages. The protein is Protein MGF 100-3L of Ornithodoros (relapsing fever ticks).